Consider the following 265-residue polypeptide: Phosphatidylglycerol--prolipoprotein diacylglyceryl transferase (265 aa).

Helical transmembrane passes span 17-37, 56-76, 92-112, and 117-137; these read LSIR…WLLG, LVTY…MLFY, WQGG…VWFF, and GKGF…GLFA. An a 1,2-diacyl-sn-glycero-3-phospho-(1'-sn-glycerol)-binding site is contributed by R139. The next 3 membrane-spanning stretches (helical) occupy residues 173 to 193, 201 to 221, and 235 to 255; these read PSQL…VWLY, GAVS…VELV, and WLTM…WLLA.

This sequence belongs to the Lgt family.

It localises to the cell inner membrane. The enzyme catalyses L-cysteinyl-[prolipoprotein] + a 1,2-diacyl-sn-glycero-3-phospho-(1'-sn-glycerol) = an S-1,2-diacyl-sn-glyceryl-L-cysteinyl-[prolipoprotein] + sn-glycerol 1-phosphate + H(+). Its pathway is protein modification; lipoprotein biosynthesis (diacylglyceryl transfer). Catalyzes the transfer of the diacylglyceryl group from phosphatidylglycerol to the sulfhydryl group of the N-terminal cysteine of a prolipoprotein, the first step in the formation of mature lipoproteins. The polypeptide is Phosphatidylglycerol--prolipoprotein diacylglyceryl transferase (Solidesulfovibrio magneticus (strain ATCC 700980 / DSM 13731 / RS-1) (Desulfovibrio magneticus)).